The following is a 264-amino-acid chain: Cell cycle regulator CcrZ (264 aa).

ATP is bound by residues Phe-32, Trp-70, and Gly-73. The Brenner's motif [HXDhX3N] motif lies at 157–164 (HGDVRHSN). The active-site Proton acceptor is the Asp-159. The APH signature appears at 173 to 196 (IYLVDWDSVRLTDRMFDVAHMLCH).

This sequence belongs to the aminoglycoside phosphotransferase family. Monomer in solution. Interacts with DnaA (via domains I (1-82) and III (111-326)). Interacts with DnaB. Interacts with FtsZ; the interaction is direct and ensures correct localization during the cell cycle.

Its subcellular location is the cytoplasm. It catalyses the reaction D-ribose + ATP = D-ribose 5-phosphate + ADP + H(+). The catalysed reaction is 2-deoxy-D-ribose + ATP = 2-deoxy-D-ribose 5-phosphate + ADP + H(+). Plays a role in cell cycle regulation and chromosome integrity. Activates DnaA-dependent chromosomal DNA replication initiation ensuring that the chromosome is replicated at the right time during the cell cycle. May regulate replication initiation through phosphorylation of a possible second messenger or metabolite, and by interacting with replication initiation proteins. Has ATPase activity with D-ribose and 2-deoxy-D-ribose in vitro, but not with choline. Involved in DNA damage response. The sequence is that of Cell cycle regulator CcrZ from Streptococcus pneumoniae serotype 2 (strain D39 / NCTC 7466).